A 486-amino-acid chain; its full sequence is Solute carrier family 2, facilitated glucose transporter member 5 (486 aa).

Met1 carries the post-translational modification N-acetylmethionine. The Cytoplasmic segment spans residues 1-19 (MEQEGQEKKKEGRLTLVLA). A helical transmembrane segment spans residues 20–40 (LRTLIAAFGSSFQYAYNVSVC). Position 33 (Tyr33) interacts with D-fructose. At 41–69 (NSPSELMTEFYNDTYYDRTGELIDEFPLT) the chain is on the extracellular side. An N-linked (GlcNAc...) asparagine glycan is attached at Asn52. The helical transmembrane segment at 70-92 (LLWSVTVSMFPSGGFAGSLLVGP) threads the bilayer. Over 93–99 (LVNKFGR) the chain is Cytoplasmic. A helical transmembrane segment spans residues 100–120 (KGALLFNNIFSIVPAILMGCS). The Extracellular segment spans residues 121-127 (KVARSFE). A helical transmembrane segment spans residues 128-150 (LIIISRLLVGICAGVSSNVVPMY). The Cytoplasmic portion of the chain corresponds to 151 to 162 (LGELAPKNLRGA). A helical membrane pass occupies residues 163–183 (LGVESQLFITLGILVAQIFGL). Gln168 provides a ligand contact to D-fructose. Topologically, residues 184–192 (RSIRQQKGW) are extracellular. A helical membrane pass occupies residues 193 to 211 (PILLGLTGGPAAAACPPFF). Topologically, residues 212-274 (PESPRYLLIG…LCAMRGLAWQ (63 aa)) are cytoplasmic. A helical transmembrane segment spans residues 275–294 (LISVVPLMWQQLSGVNAIYY). D-fructose-binding positions include Gln284 and 292 to 294 (IYY). The Extracellular segment spans residues 295 to 306 (YDQIYLSPLDTD). A helical transmembrane segment spans residues 307–327 (TQYYTAATGAVNVLMTVCTVF). Over 328 to 334 (VVESWAR) the chain is Cytoplasmic. A helical membrane pass occupies residues 335–355 (LLLLLGFSPLAPTCCVLTAAL). The Extracellular portion of the chain corresponds to 356–363 (ALQDTVSW). Residues 364-385 (MPYISIVCIIVYVIGHAIGPAI) form a helical membrane-spanning segment. His379 lines the D-fructose pocket. The Cytoplasmic portion of the chain corresponds to 386–402 (RSLYTEIFLQSGRPPTW). A helical transmembrane segment spans residues 403–421 (WGQVHWLSNFTVGLVFPLI). 407–408 (HW) contributes to the D-fructose binding site. Residues 422 to 426 (QWAGL) lie on the Extracellular side of the membrane. A helical membrane pass occupies residues 427 to 447 (YSFIIFGVACLSTTVYTFLIV). Residues 448 to 486 (PETKGKSFIEIIRRFIRMNKVEVSPDREELKDFPPDVSE) are Cytoplasmic-facing.

The protein belongs to the major facilitator superfamily. Sugar transporter (TC 2.A.1.1) family. Glucose transporter subfamily. As to expression, detected in jejunum. Detected at the intestinal brush-border membrane (at protein level). Detected in duodenum, jejunum and kidney.

It is found in the apical cell membrane. The protein localises to the cell membrane. The protein resides in the sarcolemma. The enzyme catalyses D-fructose(out) = D-fructose(in). In terms of biological role, functions as a fructose transporter that has only low activity with other monosaccharides. Can mediate the uptake of deoxyglucose, but with low efficiency. Essential for fructose uptake in the small intestine. Plays a role in the regulation of salt uptake and blood pressure in response to dietary fructose. Required for the development of high blood pressure in response to high dietary fructose intake. The polypeptide is Solute carrier family 2, facilitated glucose transporter member 5 (Oryctolagus cuniculus (Rabbit)).